A 357-amino-acid polypeptide reads, in one-letter code: Aspartate carbamoyltransferase catalytic subunit (357 aa).

Residues Met-1–Asp-17 show a composition bias toward polar residues. The tract at residues Met-1–Phe-21 is disordered. Carbamoyl phosphate contacts are provided by Arg-97 and Thr-98. Lys-125 provides a ligand contact to L-aspartate. Positions 147, 177, and 180 each coordinate carbamoyl phosphate. L-aspartate-binding residues include Arg-211 and Arg-266. Gly-307 and Pro-308 together coordinate carbamoyl phosphate.

It belongs to the aspartate/ornithine carbamoyltransferase superfamily. ATCase family. In terms of assembly, heterododecamer (2C3:3R2) of six catalytic PyrB chains organized as two trimers (C3), and six regulatory PyrI chains organized as three dimers (R2).

The enzyme catalyses carbamoyl phosphate + L-aspartate = N-carbamoyl-L-aspartate + phosphate + H(+). Its pathway is pyrimidine metabolism; UMP biosynthesis via de novo pathway; (S)-dihydroorotate from bicarbonate: step 2/3. Functionally, catalyzes the condensation of carbamoyl phosphate and aspartate to form carbamoyl aspartate and inorganic phosphate, the committed step in the de novo pyrimidine nucleotide biosynthesis pathway. In Psychrobacter arcticus (strain DSM 17307 / VKM B-2377 / 273-4), this protein is Aspartate carbamoyltransferase catalytic subunit.